The primary structure comprises 416 residues: Alpha-1-antiproteinase (416 aa).

Residues 1–24 (MALSITRGLLLLAALCCLAPTSLA) form the signal peptide. Asparagine 68, asparagine 105, asparagine 143, and asparagine 269 each carry an N-linked (GlcNAc...) asparagine glycan. Residues 371–390 (GATFLEAIPMSLPPDVEFNR) form an RCL region. Serine 381 carries the phosphoserine modification.

This sequence belongs to the serpin family. Interacts with CELA2A. Interacts with ERGIC3 and LMAN1/ERGIC53. Interacts with PRSS1/Trypsin. In terms of tissue distribution, plasma.

It localises to the secreted. Inhibits human leukocyte elastase, pig pancreatic elastase and bovine trypsin on a 1:1 molar basis. The polypeptide is Alpha-1-antiproteinase (Ovis aries (Sheep)).